Here is a 386-residue protein sequence, read N- to C-terminus: tRNA-specific adenosine deaminase subunit tad2 (386 aa).

A CMP/dCMP-type deaminase domain is found at 212-322 (TQHETYMKLA…GNDRFGGCGS (111 aa)). His-263 serves as a coordination point for Zn(2+). Catalysis depends on Glu-265, which acts as the Proton donor. Zn(2+)-binding residues include Cys-293 and Cys-296.

This sequence belongs to the cytidine and deoxycytidylate deaminase family. ADAT2 subfamily. Heterodimer with Tad3. Zn(2+) serves as cofactor.

It carries out the reaction adenosine(34) in tRNA + H2O + H(+) = inosine(34) in tRNA + NH4(+). Functionally, structural subunit of tRNA-specific adenosine deaminase, which deaminates adenosine-34 (the first, also called wobble position of the anticodon) to inosine in many tRNAs. Inosine-34 allows the decoding of 3 different nucleotides at the third position of mRNA codons, as inosine is able to pair with U, C, and A. The wobble inosine tRNA modification is essential for cell cycle progression in the G1/S and G2/M transitions in fission yeast. This chain is tRNA-specific adenosine deaminase subunit tad2 (tad2), found in Schizosaccharomyces pombe (strain 972 / ATCC 24843) (Fission yeast).